Reading from the N-terminus, the 234-residue chain is MAENHCELLPPAPGGLGAGLGGGLCRRCSAGLGALAQRPGSVSKWVRLNVGGTYFLTTRQTLCRDPKSFLYRLCQADPDLDSDKDETGAYLIDRDPTYFGPVLNYLRHGKLVINKDLAEEGVLEEAEFYNITSLIKLVKDKIRERDSKTSQVPLKHVYRVLQCQEEELTQMVSTMSDGWKFEQLVSIGSSYNYGSEDQAEFLCVVSKELHNSPHGPASEPSEKAKILQERGSRM.

The residue at position 2 (alanine 2) is an N-acetylalanine. Residues 44-146 enclose the BTB domain; sequence KWVRLNVGGT…LVKDKIRERD (103 aa). A disordered region spans residues 211-234; it reads NSPHGPASEPSEKAKILQERGSRM. A compositionally biased stretch (basic and acidic residues) spans 220 to 234; sequence PSEKAKILQERGSRM.

In terms of assembly, homopentamer. Interacts (via C-terminus) with GRASP55/GORASP2. Interacts with CUL3 and with ubiquitinated proteins. Interacts with CRY1.

Its subcellular location is the cytoplasm. It localises to the cytosol. It is found in the nucleus. Its function is as follows. Its interaction with CUL3 suggests that it may act as a substrate adapter in some E3 ligase complex. Does not affect the function of Kv channel Kv2.1/KCNB1, Kv1.2/KCNA2, Kv4.2/KCND2 and Kv3.4/KCNC4. The polypeptide is BTB/POZ domain-containing protein KCTD5 (KCTD5) (Bos taurus (Bovine)).